The chain runs to 223 residues: Small ribosomal subunit protein uS3 (223 aa).

Residues 38–106 enclose the KH type-2 domain; sequence IKKYLKSKLA…EVHLNIVEIR (69 aa).

Belongs to the universal ribosomal protein uS3 family. In terms of assembly, part of the 30S ribosomal subunit. Forms a tight complex with proteins S10 and S14.

In terms of biological role, binds the lower part of the 30S subunit head. Binds mRNA in the 70S ribosome, positioning it for translation. The protein is Small ribosomal subunit protein uS3 of Rhodospirillum rubrum (strain ATCC 11170 / ATH 1.1.1 / DSM 467 / LMG 4362 / NCIMB 8255 / S1).